We begin with the raw amino-acid sequence, 186 residues long: Crossover junction endodeoxyribonuclease RuvC (186 aa).

Active-site residues include aspartate 7, glutamate 73, and aspartate 145. Aspartate 7, glutamate 73, and aspartate 145 together coordinate Mg(2+).

The protein belongs to the RuvC family. Homodimer which binds Holliday junction (HJ) DNA. The HJ becomes 2-fold symmetrical on binding to RuvC with unstacked arms; it has a different conformation from HJ DNA in complex with RuvA. In the full resolvosome a probable DNA-RuvA(4)-RuvB(12)-RuvC(2) complex forms which resolves the HJ. Requires Mg(2+) as cofactor.

The protein resides in the cytoplasm. The catalysed reaction is Endonucleolytic cleavage at a junction such as a reciprocal single-stranded crossover between two homologous DNA duplexes (Holliday junction).. Functionally, the RuvA-RuvB-RuvC complex processes Holliday junction (HJ) DNA during genetic recombination and DNA repair. Endonuclease that resolves HJ intermediates. Cleaves cruciform DNA by making single-stranded nicks across the HJ at symmetrical positions within the homologous arms, yielding a 5'-phosphate and a 3'-hydroxyl group; requires a central core of homology in the junction. The consensus cleavage sequence is 5'-(A/T)TT(C/G)-3'. Cleavage occurs on the 3'-side of the TT dinucleotide at the point of strand exchange. HJ branch migration catalyzed by RuvA-RuvB allows RuvC to scan DNA until it finds its consensus sequence, where it cleaves and resolves the cruciform DNA. This is Crossover junction endodeoxyribonuclease RuvC from Acidovorax sp. (strain JS42).